An 817-amino-acid chain; its full sequence is General transcription factor 3C polypeptide 4 (817 aa).

M1 carries the post-translational modification N-acetylmethionine. The disordered stretch occupies residues 1-40 (MSEADQALVGPKADEPSPPAEEKDEGGGKEAAADAAPGPS). K221 is covalently cross-linked (Glycyl lysine isopeptide (Lys-Gly) (interchain with G-Cter in SUMO2)). A phosphoserine mark is found at S600 and S607. The disordered stretch occupies residues 603-658 (LLVDSPGMGDGEDEQQEEGTSKQGTKAGLQEKSKEGDTEETPEDSLTAGGDTGGRE). K624 participates in a covalent cross-link: Glycyl lysine isopeptide (Lys-Gly) (interchain with G-Cter in SUMO2). S647 bears the Phosphoserine mark.

It belongs to the TFIIIC subunit 4 family. In terms of assembly, part of the TFIIIC subcomplex TFIIIC2, consisting of six subunits, GTF3C1, GTF3C2, GTF3C3, GTF3C4, GTF3C5 and GTF3C6. Interacts with BRF1, GTF3C1, GTF3C2, GTF3C5, GTF3C6, POLR3C and POLR3F.

Its subcellular location is the nucleus. It catalyses the reaction L-lysyl-[protein] + acetyl-CoA = N(6)-acetyl-L-lysyl-[protein] + CoA + H(+). In terms of biological role, essential for RNA polymerase III to make a number of small nuclear and cytoplasmic RNAs, including 5S RNA, tRNA, and adenovirus-associated (VA) RNA of both cellular and viral origin. Has histone acetyltransferase activity (HAT) with unique specificity for free and nucleosomal H3. May cooperate with GTF3C5 in facilitating the recruitment of TFIIIB and RNA polymerase through direct interactions with BRF1, POLR3C and POLR3F. May be localized close to the A box. In Mus musculus (Mouse), this protein is General transcription factor 3C polypeptide 4 (Gtf3c4).